The primary structure comprises 313 residues: uncharacterized protein (313 aa).

To B.subtilis YqxC and T.hyodysenteriae hemolysin TlyA.

This is an uncharacterized protein from Bacillus subtilis (strain 168).